We begin with the raw amino-acid sequence, 179 residues long: Enhancer of split m8 protein (179 aa).

The region spanning 10 to 65 is the bHLH domain; the sequence is YQKVKKPMLERQRRARMNKCLDNLKTLVAELRGDDGILRMDKAEMLESAVIFMRQQ. Residues 83–116 form the Orange domain; sequence FKNGYMNAVNEVSRVMASTPGMSVDLGKSVMTHL. Residues 146–179 are disordered; the sequence is DKAPLSPASSGYHSDCDSPAPSPQPMQQPLWRPW. A WRPW motif motif is present at residues 176 to 179; sequence WRPW.

In terms of assembly, homodimer. Heterodimers with dpn. Transcription repression requires formation of a complex with a corepressor protein (Groucho).

Its subcellular location is the nucleus. Its function is as follows. Participates in the control of cell fate choice by uncommitted neuroectodermal cells in the embryo. Transcriptional repressor. Binds DNA on N-box motifs: 5'-CACNAG-3'. Part of the Notch signaling pathway. The polypeptide is Enhancer of split m8 protein (Drosophila melanogaster (Fruit fly)).